Here is a 1220-residue protein sequence, read N- to C-terminus: Plasma membrane calcium-transporting ATPase 1 (1220 aa).

Position 2 is an N-acetylglycine (glycine 2). Topologically, residues 2 to 105 are cytoplasmic; sequence GDMANNSVAY…KTFLQLVWEA (104 aa). Phosphoserine is present on residues serine 8 and serine 17. A helical membrane pass occupies residues 106–126; that stretch reads LQDVTLIILEIAAIVSLGLSF. Residues 127 to 154 are Extracellular-facing; sequence YQPPEGDNALCGEVSVGEEEGEGETGWI. A helical transmembrane segment spans residues 155-175; it reads EGAAILLSVVCVVLVTAFNDW. At 176–366 the chain is on the cytoplasmic side; that stretch reads SKEKQFRGLQ…KEKSVLQGKL (191 aa). The interval 297-356 is disordered; that stretch reads EEEKKDEKKKEKKNKKQDGAIENRNKAKAQDGAAMEMQPLKSEEGGDGDEKDKKKANLPK. Composition is skewed to basic and acidic residues over residues 312–325 and 337–356; these read KQDG…KAKA and KSEE…NLPK. Serine 338 is modified (phosphoserine). Residues 367–386 form a helical membrane-spanning segment; sequence TKLAVQIGKAGLLMSAITVI. Residues 387–418 are Extracellular-facing; the sequence is ILVLYFVIDTFWVQKRPWLAECTPIYIQYFVK. A helical membrane pass occupies residues 419–439; that stretch reads FFIIGVTVLVVAVPEGLPLAV. Residues 440–855 lie on the Cytoplasmic side of the membrane; the sequence is TISLAYSVKK…RNVYDSISKF (416 aa). The active-site 4-aspartylphosphate intermediate is aspartate 475. Mg(2+)-binding residues include aspartate 475, threonine 477, and aspartate 797. The chain crosses the membrane as a helical span at residues 856–876; it reads LQFQLTVNVVAVIVAFTGACI. Over 877–882 the chain is Extracellular; that stretch reads TQDSPL. A helical membrane pass occupies residues 883 to 903; it reads KAVQMLWVNLIMDTLASLALA. At 904–927 the chain is on the cytoplasmic side; the sequence is TEPPTESLLLRKPYGRNKPLISRT. The helical transmembrane segment at 928-948 threads the bilayer; that stretch reads MMKNILGHAFYQLVVVFTLLF. Residues 949 to 971 lie on the Extracellular side of the membrane; it reads AGEKFFDIDSGRNAPLHAPPSEH. Residues 972–991 traverse the membrane as a helical segment; it reads YTIVFNTFVLMQLFNEINAR. Residues 992–1005 lie on the Cytoplasmic side of the membrane; sequence KIHGERNVFEGIFN. A helical transmembrane segment spans residues 1006 to 1027; the sequence is NAIFCTIVLGTFVVQIIIVQFG. The Extracellular segment spans residues 1028–1039; that stretch reads GKPFSCSELSIE. Residues 1040–1060 traverse the membrane as a helical segment; the sequence is QWLWSIFLGMGTLLWGQLIST. At 1061-1220 the chain is on the cytoplasmic side; the sequence is IPTSRLKFLK…SPLHSLETSL (160 aa). Residues 1100–1117 form a calmodulin-binding subdomain A region; sequence LRRGQILWFRGLNRIQTQ. Threonine 1116 carries the phosphothreonine; by PKC modification. A required for basolateral membrane targeting region spans residues 1118–1220; the sequence is IRVVNAFRSS…SPLHSLETSL (103 aa). A phosphoserine mark is found at serine 1140 and serine 1155. Residues 1162–1220 form a disordered region; it reads IDDTDAEDDAPTKRNSSPPPSPNKNNNAVDSGIHLTIEMNKSATSSSPGSPLHSLETSL. Phosphothreonine is present on threonine 1165. At serine 1177 the chain carries Phosphoserine; by PKA. Phosphoserine is present on residues serine 1178 and serine 1182. Positions 1200–1220 are enriched in polar residues; that stretch reads MNKSATSSSPGSPLHSLETSL.

This sequence belongs to the cation transport ATPase (P-type) (TC 3.A.3) family. Type IIB subfamily. Monomer. Dimer. Oligomer. Calmodulin binding. Interacts with PDZD11. Interacts with SLC35G1 and STIM1. Interacts with YWHAE; interacts with the monomeric and dimeric forms of the YWHAE but prefer the monomer form; this interaction inhibits calcium-transporting ATPase activity. Interacts with NPTN; this interaction stabilizes ATP2B1 and increases ATPase activity; this interaction controls T cell calcium homeostasis following T cell activation. Interacts with EPB41; regulates small intestinal calcium absorption through regulation of membrane expression of ATP2B1. In terms of tissue distribution, isoform B is ubiquitously expressed. Isoforms A and E have only been found in brain cortex. Isoform C is found in brain cortex, skeletal muscle and heart muscle. Isoform D has only been found in fetal skeletal muscle. Isoform K has been found in small intestine and liver. Isoform B is expressed in hair cells of inner ear.

It localises to the cell membrane. The protein localises to the basolateral cell membrane. It is found in the synapse. The protein resides in the presynaptic cell membrane. Its subcellular location is the cytoplasmic vesicle. It localises to the secretory vesicle. The protein localises to the synaptic vesicle membrane. It carries out the reaction Ca(2+)(in) + ATP + H2O = Ca(2+)(out) + ADP + phosphate + H(+). Functionally, catalyzes the hydrolysis of ATP coupled with the transport of calcium from the cytoplasm to the extracellular space thereby maintaining intracellular calcium homeostasis. Plays a role in blood pressure regulation through regulation of intracellular calcium concentration and nitric oxide production leading to regulation of vascular smooth muscle cells vasoconstriction. Positively regulates bone mineralization through absorption of calcium from the intestine. Plays dual roles in osteoclast differentiation and survival by regulating RANKL-induced calcium oscillations in preosteoclasts and mediating calcium extrusion in mature osteoclasts. Regulates insulin sensitivity through calcium/calmodulin signaling pathway by regulating AKT1 activation and NOS3 activation in endothelial cells. May play a role in synaptic transmission by modulating calcium and proton dynamics at the synaptic vesicles. This is Plasma membrane calcium-transporting ATPase 1 from Rattus norvegicus (Rat).